The chain runs to 663 residues: Transketolase 2 (663 aa).

His25 is a substrate binding site. Residues His65 and 113–115 (GPL) contribute to the thiamine diphosphate site. Mg(2+) is bound at residue Asp154. Thiamine diphosphate contacts are provided by Gly155 and Asn184. 2 residues coordinate Mg(2+): Asn184 and Ile186. 3 residues coordinate substrate: His259, Arg356, and Ser383. Position 259 (His259) interacts with thiamine diphosphate. Glu410 serves as the catalytic Proton donor. Phe436 is a binding site for thiamine diphosphate. Residues His460, Asp468, and Arg519 each contribute to the substrate site.

Belongs to the transketolase family. In terms of assembly, homodimer. Mg(2+) serves as cofactor. Requires Ca(2+) as cofactor. The cofactor is Mn(2+). It depends on Co(2+) as a cofactor. Thiamine diphosphate is required as a cofactor.

It catalyses the reaction D-sedoheptulose 7-phosphate + D-glyceraldehyde 3-phosphate = aldehydo-D-ribose 5-phosphate + D-xylulose 5-phosphate. Its function is as follows. Catalyzes the transfer of a two-carbon ketol group from a ketose donor to an aldose acceptor, via a covalent intermediate with the cofactor thiamine pyrophosphate. The sequence is that of Transketolase 2 (tkt2) from Vibrio parahaemolyticus serotype O3:K6 (strain RIMD 2210633).